The primary structure comprises 65 residues: DNA gyrase inhibitor YacG (65 aa).

Residues Cys10, Cys13, Cys29, and Cys33 each coordinate Zn(2+). The segment at 45–65 (EKAIPGAPDMSDSDGWSEDQY) is disordered. A compositionally biased stretch (acidic residues) spans 55–65 (SDSDGWSEDQY).

It belongs to the DNA gyrase inhibitor YacG family. As to quaternary structure, interacts with GyrB. The cofactor is Zn(2+).

In terms of biological role, inhibits all the catalytic activities of DNA gyrase by preventing its interaction with DNA. Acts by binding directly to the C-terminal domain of GyrB, which probably disrupts DNA binding by the gyrase. This chain is DNA gyrase inhibitor YacG, found in Vibrio cholerae serotype O1 (strain ATCC 39315 / El Tor Inaba N16961).